Here is a 458-residue protein sequence, read N- to C-terminus: Sulfite efflux pump SSU1 (458 aa).

The Cytoplasmic segment spans residues 1–11 (MVANWVLALTR). A helical membrane pass occupies residues 12 to 32 (QFDPFMFMMVMGVGISSNILY). Topologically, residues 33–48 (SFPYPARWLRICSYIM) are extracellular. A helical transmembrane segment spans residues 49-69 (FAIACLIFIAVQALQILHLIV). Over 70 to 89 (YIKEKSFREYFNDFFRNMKH) the chain is Cytoplasmic. Residues 90 to 110 (NLFWGTYPMGLVTIINFLGAL) form a helical membrane-spanning segment. Residues 111-135 (SKANTTKSPTNARNLMIFVYVLWWY) are Extracellular-facing. A helical transmembrane segment spans residues 136–156 (DLAVCLVIAWGISFLIWHDYY). Topologically, residues 157–176 (PLEGIGNYPSYNIKMASENM) are cytoplasmic. Residues 177 to 197 (KSVLLLDIIPLVVVASSCGTF) form a helical membrane-spanning segment. At 198-220 (TMSEIFFHAFNRNIQLITLVICA) the chain is on the extracellular side. Residues 221-241 (LTWLHAIIFVFILIAIYFWSL) form a helical membrane-spanning segment. The Cytoplasmic segment spans residues 242 to 252 (YINKIPPMTQV). A helical transmembrane segment spans residues 253–275 (FTLFLLLGPMGQGSFGVLLLTDN). Over 276-309 (IKKYAGKYYPTDNITREQEILTIAVPWCFKILGM) the chain is Extracellular. A helical membrane pass occupies residues 310–330 (VSAMALLAMGYFFTVISVVSI). The Cytoplasmic segment spans residues 331–350 (LSYYNKKEIENETGKVKRVY). Residues 351–371 (TFHKGFWGMTFPMGTMSLGNE) traverse the membrane as a helical segment. Topologically, residues 372–387 (ELYVQYNQYVPLYAFR) are extracellular. Residues 388–408 (VLGTIYGGVCVCWSILCLLCT) form a helical membrane-spanning segment. Topologically, residues 409–458 (LHEYSKKMLHAARKSSLFSESGTEKTTVSPYNSIESVEESNSALDFTRLA) are cytoplasmic. Phosphoserine occurs at positions 444, 448, and 450.

This sequence belongs to the tellurite-resistance/dicarboxylate transporter (TDT) family.

It localises to the cell membrane. In terms of biological role, involved in efflux of free sulfite. Mutations in the SSU1 gene cause sensitivity to sulfite. The protein is Sulfite efflux pump SSU1 (SSU1) of Saccharomyces cerevisiae (strain ATCC 204508 / S288c) (Baker's yeast).